Consider the following 81-residue polypeptide: Photosystem I iron-sulfur center (81 aa).

2 4Fe-4S ferredoxin-type domains span residues 2 to 31 and 39 to 68; these read AHSV…MIPW and IASA…VRVY. The [4Fe-4S] cluster site is built by cysteine 11, cysteine 14, cysteine 17, cysteine 21, cysteine 48, cysteine 51, cysteine 54, and cysteine 58.

In terms of assembly, the eukaryotic PSI reaction center is composed of at least 11 subunits. It depends on [4Fe-4S] cluster as a cofactor.

The protein localises to the plastid. Its subcellular location is the chloroplast thylakoid membrane. It carries out the reaction reduced [plastocyanin] + hnu + oxidized [2Fe-2S]-[ferredoxin] = oxidized [plastocyanin] + reduced [2Fe-2S]-[ferredoxin]. In terms of biological role, apoprotein for the two 4Fe-4S centers FA and FB of photosystem I (PSI); essential for photochemical activity. FB is the terminal electron acceptor of PSI, donating electrons to ferredoxin. The C-terminus interacts with PsaA/B/D and helps assemble the protein into the PSI complex. Required for binding of PsaD and PsaE to PSI. PSI is a plastocyanin-ferredoxin oxidoreductase, converting photonic excitation into a charge separation, which transfers an electron from the donor P700 chlorophyll pair to the spectroscopically characterized acceptors A0, A1, FX, FA and FB in turn. This is Photosystem I iron-sulfur center from Pinus thunbergii (Japanese black pine).